The following is a 106-amino-acid chain: uncharacterized protein (106 aa).

The protein localises to the mitochondrion. This is an uncharacterized protein from Arabidopsis thaliana (Mouse-ear cress).